The following is a 332-amino-acid chain: DGAT1/2-independent enzyme synthesizing storage lipids (332 aa).

The Lumenal segment spans residues 1–10 (MIGSNESSTE). A glycan (N-linked (GlcNAc...) asparagine) is linked at asparagine 5. The helical transmembrane segment at 11-31 (GPIPTSYLSFLAYLLGEWTGV) threads the bilayer. The Cytoplasmic portion of the chain corresponds to 32–45 (EHTEDYLSYGAYLS). A helical transmembrane segment spans residues 46–66 (WVLFPLAIVFILPVAIFFFCF). Residues 67–332 (NTSLLLLHIY…ERFQTRQKED (266 aa)) lie on the Lumenal side of the membrane. Histidine 132 is a catalytic residue. Asparagine 289 carries an N-linked (GlcNAc...) asparagine glycan.

It belongs to the diacylglycerol acyltransferase family. Highly divergent.

It is found in the endoplasmic reticulum membrane. The enzyme catalyses a 1,2-diacylglycerol + a 1,2-diacyl-sn-glycero-3-phosphocholine = a triacylglycerol + a 1-acyl-sn-glycero-3-phosphocholine. It carries out the reaction a 1-O-alkyl-2-acyl-sn-glycero-3-phosphocholine + a 1,2-diacylglycerol = a 1-O-alkyl-sn-glycero-3-phosphocholine + a triacylglycerol. The catalysed reaction is a 2-acylglycerol + an acyl-CoA = a 1,2-diacylglycerol + CoA. It catalyses the reaction an acyl-CoA + a 1,2-diacyl-sn-glycerol = a triacyl-sn-glycerol + CoA. The enzyme catalyses 2-(9Z-octadecenoyl)-glycerol + (9Z)-octadecenoyl-CoA = 1,2-di-(9Z-octadecenoyl)-glycerol + CoA. It carries out the reaction 1,2-di-(9Z-octadecenoyl)-sn-glycerol + (9Z)-octadecenoyl-CoA = 1,2,3-tri-(9Z-octadecenoyl)-glycerol + CoA. Catalytic subunit of the alternative triglyceride biosynthesis pathway, which mediates formation of triacylglycerol from diacylglycerol and membrane phospholipids. Synthesizes triacylglycerol at the expense of membrane phospholipids, such as phosphatidylcholine (PC) and its ether-linked form (ePC), thereby altering the composition of membranes. The alternative triglyceride biosynthesis pathway is probably required to provide the energy required for rapid growth when fuel sources are limiting. It maintains mitochondrial function during periods of extracellular lipid starvation. Can also use acyl-CoA as donor: acts as a acyl-CoA:monoacylglycerol acyltransferase (MGAT), but also shows acyl-CoA:diacylglycerol acyltransferase (DGAT) activity. The sequence is that of DGAT1/2-independent enzyme synthesizing storage lipids (TMEM68) from Gallus gallus (Chicken).